Here is a 551-residue protein sequence, read N- to C-terminus: uncharacterized protein (551 aa).

The N-terminal 36 residues, 1–36 (MMALVRDRRAHYVMSIVIRWVHCFSSSLRGTFGTRW), are a transit peptide targeting the mitochondrion. Residues 203 to 315 (TNILLRKLKE…MDSRDRLREE (113 aa)) adopt a coiled-coil conformation. The interval 354 to 389 (REASLSPWPKSPPSTTALRPHSATMSVSSAGAQKAK) is disordered. Residues 366–384 (PSTTALRPHSATMSVSSAG) show a composition bias toward polar residues. Residues 405-439 (KHGLESQIEALKANLENEKKKVERFRKEADRLNKS) adopt a coiled-coil conformation. The segment at 519–551 (LQLSPKGKLSESPKEESLEEPSMRQSSPAETVD) is disordered. Residues 541-551 (MRQSSPAETVD) show a composition bias toward polar residues.

Interacts with NOD2.

The protein resides in the mitochondrion. This is an uncharacterized protein from Homo sapiens (Human).